The sequence spans 335 residues: Magnesium-protoporphyrin IX monomethyl ester [oxidative] cyclase (335 aa).

It belongs to the AcsF family. Fe cation is required as a cofactor.

The protein localises to the plastid. It localises to the chloroplast. The catalysed reaction is Mg-protoporphyrin IX 13-monomethyl ester + 3 NADPH + 3 O2 + 2 H(+) = 3,8-divinyl protochlorophyllide a + 3 NADP(+) + 5 H2O. Its pathway is porphyrin-containing compound metabolism; chlorophyll biosynthesis (light-independent). Catalyzes the formation of the isocyclic ring in chlorophyll biosynthesis. Mediates the cyclase reaction, which results in the formation of divinylprotochlorophyllide (Pchlide) characteristic of all chlorophylls from magnesium-protoporphyrin IX 13-monomethyl ester (MgPMME). The chain is Magnesium-protoporphyrin IX monomethyl ester [oxidative] cyclase from Cyanidioschyzon merolae (strain NIES-3377 / 10D) (Unicellular red alga).